The primary structure comprises 414 residues: Histidine--tRNA ligase (414 aa).

Belongs to the class-II aminoacyl-tRNA synthetase family. As to quaternary structure, homodimer.

It is found in the cytoplasm. The enzyme catalyses tRNA(His) + L-histidine + ATP = L-histidyl-tRNA(His) + AMP + diphosphate + H(+). In Mycoplasma mycoides subsp. mycoides SC (strain CCUG 32753 / NCTC 10114 / PG1), this protein is Histidine--tRNA ligase.